Here is a 365-residue protein sequence, read N- to C-terminus: Probable dual-specificity RNA methyltransferase RlmN (365 aa).

Glu108 (proton acceptor) is an active-site residue. Positions 114 to 352 (YPDRNTVCIS…SCTVRDTRGR (239 aa)) constitute a Radical SAM core domain. The cysteines at positions 121 and 358 are disulfide-linked. Cys128, Cys132, and Cys135 together coordinate [4Fe-4S] cluster. Residues 179–180 (GE), Ser213, 236–238 (SLH), and Asn315 each bind S-adenosyl-L-methionine. Cys358 (S-methylcysteine intermediate) is an active-site residue.

This sequence belongs to the radical SAM superfamily. RlmN family. The cofactor is [4Fe-4S] cluster.

It localises to the cytoplasm. It catalyses the reaction adenosine(2503) in 23S rRNA + 2 reduced [2Fe-2S]-[ferredoxin] + 2 S-adenosyl-L-methionine = 2-methyladenosine(2503) in 23S rRNA + 5'-deoxyadenosine + L-methionine + 2 oxidized [2Fe-2S]-[ferredoxin] + S-adenosyl-L-homocysteine. The catalysed reaction is adenosine(37) in tRNA + 2 reduced [2Fe-2S]-[ferredoxin] + 2 S-adenosyl-L-methionine = 2-methyladenosine(37) in tRNA + 5'-deoxyadenosine + L-methionine + 2 oxidized [2Fe-2S]-[ferredoxin] + S-adenosyl-L-homocysteine. Specifically methylates position 2 of adenine 2503 in 23S rRNA and position 2 of adenine 37 in tRNAs. This Mycolicibacterium vanbaalenii (strain DSM 7251 / JCM 13017 / BCRC 16820 / KCTC 9966 / NRRL B-24157 / PYR-1) (Mycobacterium vanbaalenii) protein is Probable dual-specificity RNA methyltransferase RlmN.